A 315-amino-acid polypeptide reads, in one-letter code: DNA-directed RNA polymerase subunit alpha (315 aa).

The segment at methionine 1–serine 228 is alpha N-terminal domain (alpha-NTD). The segment at threonine 243–asparagine 315 is alpha C-terminal domain (alpha-CTD).

This sequence belongs to the RNA polymerase alpha chain family. As to quaternary structure, homodimer. In cyanobacteria the RNAP catalytic core is composed of 2 alpha, 1 beta, 1 beta', 1 gamma and 1 omega subunit. When a sigma factor is associated with the core the holoenzyme is formed, which can initiate transcription.

The enzyme catalyses RNA(n) + a ribonucleoside 5'-triphosphate = RNA(n+1) + diphosphate. Its function is as follows. DNA-dependent RNA polymerase catalyzes the transcription of DNA into RNA using the four ribonucleoside triphosphates as substrates. The protein is DNA-directed RNA polymerase subunit alpha of Nostoc sp. (strain PCC 7120 / SAG 25.82 / UTEX 2576).